Here is a 251-residue protein sequence, read N- to C-terminus: Imidazole glycerol phosphate synthase subunit HisF (251 aa).

Catalysis depends on residues D11 and D130.

The protein belongs to the HisA/HisF family. Heterodimer of HisH and HisF.

The protein resides in the cytoplasm. The catalysed reaction is 5-[(5-phospho-1-deoxy-D-ribulos-1-ylimino)methylamino]-1-(5-phospho-beta-D-ribosyl)imidazole-4-carboxamide + L-glutamine = D-erythro-1-(imidazol-4-yl)glycerol 3-phosphate + 5-amino-1-(5-phospho-beta-D-ribosyl)imidazole-4-carboxamide + L-glutamate + H(+). It participates in amino-acid biosynthesis; L-histidine biosynthesis; L-histidine from 5-phospho-alpha-D-ribose 1-diphosphate: step 5/9. In terms of biological role, IGPS catalyzes the conversion of PRFAR and glutamine to IGP, AICAR and glutamate. The HisF subunit catalyzes the cyclization activity that produces IGP and AICAR from PRFAR using the ammonia provided by the HisH subunit. This is Imidazole glycerol phosphate synthase subunit HisF from Cytophaga hutchinsonii (strain ATCC 33406 / DSM 1761 / CIP 103989 / NBRC 15051 / NCIMB 9469 / D465).